A 133-amino-acid chain; its full sequence is Putative pre-16S rRNA nuclease (133 aa).

It belongs to the YqgF nuclease family.

It is found in the cytoplasm. Could be a nuclease involved in processing of the 5'-end of pre-16S rRNA. The protein is Putative pre-16S rRNA nuclease of Dehalococcoides mccartyi (strain ATCC BAA-2266 / KCTC 15142 / 195) (Dehalococcoides ethenogenes (strain 195)).